Reading from the N-terminus, the 222-residue chain is Charged multivesicular body protein 4b (222 aa).

Disordered stretches follow at residues 1–21 and 177–222; these read MSLIGKLFGTGGKGAKGPSPQ and NLLE…WATA. A coiled-coil region spans residues 21–182; the sequence is QEAIQKLRDT…ELDKNLLEVQ (162 aa).

The protein belongs to the SNF7 family. Probable core component of the endosomal sorting required for transport complex III (ESCRT-III). ESCRT-III components are thought to multimerize to form a flat lattice on the perimeter membrane of the endosome.

It localises to the cytoplasm. It is found in the cytosol. The protein resides in the late endosome membrane. The protein localises to the midbody. Functionally, probable core component of the endosomal sorting required for transport complex III (ESCRT-III) which is involved in multivesicular bodies (MVBs) formation and sorting of endosomal cargo proteins into MVBs. MVBs contain intraluminal vesicles (ILVs) that are generated by invagination and scission from the limiting membrane of the endosome and mostly are delivered to lysosomes enabling degradation of membrane proteins, such as stimulated growth factor receptors, lysosomal enzymes and lipids. This is Charged multivesicular body protein 4b (chmp4b) from Xenopus laevis (African clawed frog).